A 370-amino-acid chain; its full sequence is Adaptive-response sensory kinase SasA (370 aa).

In terms of domain architecture, Histidine kinase spans 152-365 (MVAHELRTPL…CFYLTVPVWQ (214 aa)). At histidine 155 the chain carries Phosphohistidine; by autocatalysis.

In terms of assembly, homooligomerizes. Interacts with KaiC. Participates in the KaiBC complex, whose core is composed of a KaiC homohexamer and 6 KaiB.

The enzyme catalyses ATP + protein L-histidine = ADP + protein N-phospho-L-histidine.. Functionally, member of the two-component regulatory system SasA/RpaA involved in genome-wide circadian gene expression. One of several clock output pathways. Participates in the Kai clock protein complex, the main circadian regulator in cyanobacteria, via its interaction with KaiC. KaiC enhances the autophosphorylation activity of SasA, which then transfers its phosphate group to RpaA to activate it. In addition to its output function, recruits fold-shifted KaiB (KaiB(fs)) to KaiC to cooperatively form the KaiB(6):KaiC(6) complex (independent of SasA kinase activity). Required for robustness of the circadian rhythm of gene expression and is involved in clock output, also required for adaptation to light/dark cycles. In Prochlorococcus marinus (strain MIT 9313), this protein is Adaptive-response sensory kinase SasA.